Here is a 66-residue protein sequence, read N- to C-terminus: Sarcoplasmic/endoplasmic reticulum calcium ATPase regulator ARLN (66 aa).

N-acetylmethionine is present on Met-1. The tract at residues 1 to 38 (MEVDVPGVDGRDGLRERRGLSEGGRQNLDVRPQSGANG) is disordered. Over residues 9–20 (DGRDGLRERRGL) the composition is skewed to basic and acidic residues. Residues 45-65 (WLDLWLFIFFDVVVFLFVYFL) traverse the membrane as a helical segment.

In terms of assembly, homooligomer. Can also form heterooligomers with other sarcoplasmic/endoplasmic reticulum calcium ATPase (SERCA) regulators ERLN, PLN, SLN and STRIT1/DWORF. Monomer. Interacts as a monomer with ATP2A2/SERCA2; the interaction results in inhibition of ATP2A2 Ca(2+) affinity.

It is found in the endoplasmic reticulum membrane. In terms of biological role, inhibits the activity of the calcium ATPases ATP2A2/SERCA2 and ATP2A3/SERCA3 by decreasing their apparent affinity for Ca(2+). This Pongo abelii (Sumatran orangutan) protein is Sarcoplasmic/endoplasmic reticulum calcium ATPase regulator ARLN (ARLN).